We begin with the raw amino-acid sequence, 2813 residues long: von Willebrand factor (2813 aa).

Positions 1 to 22 are cleaved as a signal peptide; sequence MSPTRLVRVLLALALILPGKLC. A propeptide spanning residues 23-763 is cleaved from the precursor; the sequence is TKGTVGRSSM…SSPRSHRSKR (741 aa). In terms of domain architecture, VWFD 1 spans 33–201; that stretch reads ARCSLFGGDF…ALSSGEQRCK (169 aa). Intrachain disulfides connect Cys35–Cys162 and Cys57–Cys200. 3 N-linked (GlcNAc...) asparagine glycosylation sites follow: Asn99, Asn156, and Asn211. A TIL 1 domain is found at 295 to 348; the sequence is CPAGMEYKECVSPCTRTCQSLHVKEVCQEQCVDGCSCPEGQLLDEGHCVGSAEC. The VWFD 2 domain maps to 386 to 560; it reads GECLVTGQSH…NAWKLLGACE (175 aa). 3 disulfides stabilise this stretch: Cys388-Cys524, Cys410-Cys559, and Cys432-Cys440. The short motif at 531–533 is the Cell attachment site element; that stretch reads RGD. TIL domains follow at residues 652-707 and 776-827; these read CPQG…KAQC and CPAD…LERC. Asn666 is a glycosylation site (N-linked (GlcNAc...) asparagine). Positions 698–700 match the Cell attachment site motif; sequence RGD. The interval 764–787 is amino-terminal; sequence SLSCRPPMVKLVCPADNPRAEGLE. 3 disulfide bridges follow: Cys767/Cys808, Cys776/Cys804, and Cys810/Cys821. An E1 region spans residues 788-833; it reads CAKTCQNYDLQCMSTGCVSGCLCPQGMVRHENRCVALERCPCFHQG. Residues 826-853 are CX; the sequence is RCPCFHQGQEYAPGETVKIDCNTCVCRD. An N-linked (GlcNAc...) asparagine glycan is attached at Asn857. The 168-residue stretch at 865–1032 folds into the VWFD 3 domain; the sequence is ATCSAIGMAH…NSWKVNPQCA (168 aa). 11 disulfides stabilise this stretch: Cys867-Cys996, Cys889-Cys1031, Cys898-Cys993, Cys914-Cys921, Cys1060-Cys1084, Cys1071-Cys1111, Cys1089-Cys1091, Cys1126-Cys1130, Cys1149-Cys1169, Cys1153-Cys1165, and Cys1196-Cys1199. Positions 1146 to 1196 constitute a TIL 4 domain; it reads YNSCAPACPITCQHPEPLACPVQCVEGCHAHCPPGKILDELLQTCIDPEDC. An N-linked (GlcNAc...) asparagine glycan is attached at Asn1231. 2 disulfides stabilise this stretch: Cys1234–Cys1237 and Cys1272–Cys1458. VWFA domains are found at residues 1277-1453 and 1498-1665; these read DLVF…RDEI and DVVF…PDLV. 2 N-linked (GlcNAc...) asparagine glycosylation sites follow: Asn1515 and Asn1574. Cystine bridges form between Cys1669-Cys1670, Cys1686-Cys1872, Cys1879-Cys1904, Cys1899-Cys1940, Cys1927-Cys2088, Cys1950-Cys2085, Cys1972-Cys2123, and Cys1993-Cys2001. Residues 1691-1871 enclose the VWFA 3 domain; it reads DVVLLLDGSS…TLGNSFFHKL (181 aa). The VWFD 4 domain maps to 1948–2124; the sequence is CVCMGSSTRH…TVQQLGKTCQ (177 aa). The segment at 2216–2261 is E2; sequence CPRLCEGNTSSCGDQPSEGCFCPPNQVMLEGSCVPEEACTQCISED. Asn2223, Asn2290, Asn2357, and Asn2400 each carry an N-linked (GlcNAc...) asparagine glycan. Positions 2255–2328 constitute a VWFC 1 domain; that stretch reads TQCISEDGVR…CCPEYECVCD (74 aa). The VWFC 2 domain maps to 2429–2495; it reads KVCVHRGTIY…HEGECCGRCL (67 aa). Positions 2507–2509 match the Cell attachment site motif; sequence RGD. N-linked (GlcNAc...) asparagine glycosylation is found at Asn2546 and Asn2585. In terms of domain architecture, VWFC 3 spans 2580 to 2645; it reads EACLLNGTII…NQGECCGRCL (66 aa). Cystine bridges form between Cys2724–Cys2774, Cys2739–Cys2788, Cys2750–Cys2804, and Cys2754–Cys2806. Residues 2724–2812 enclose the CTCK domain; it reads CKDIIAKLQR…QCRCSPRKCS (89 aa). An N-linked (GlcNAc...) asparagine glycan is attached at Asn2790.

In terms of assembly, multimeric. Interacts with F8. Post-translationally, all cysteine residues are involved in intrachain or interchain disulfide bonds. N- and O-glycosylated. As to expression, plasma.

The protein localises to the secreted. It localises to the extracellular space. It is found in the extracellular matrix. Its function is as follows. Important in the maintenance of hemostasis, it promotes adhesion of platelets to the sites of vascular injury by forming a molecular bridge between sub-endothelial collagen matrix and platelet-surface receptor complex, glycoprotein Ibalpha/IX/V. Also acts as a chaperone for coagulation factor VIII, delivering it to the site of injury, stabilizing its heterodimeric structure and protecting it from premature clearance from plasma. This chain is von Willebrand factor (VWF), found in Canis lupus familiaris (Dog).